Here is a 398-residue protein sequence, read N- to C-terminus: MVFLGKILPLALAALSVNGAEILSAPGAENIPNGYIVVMKEGTSTQDFDAHREWVASVHHERLARRGSTNVGGMRHTYNFNQGFMGYAGTFDEETIQEIANRDDVAYIERDQIMKASAIQTQRNVPSWGLARVSSRQPGGRDYSYDSTAGQGVTAYIIDTGIDIRHTDFGGRAVWGTNTVDRRNEDCNGHGTHVAGTTGGTSFGVAKRARLVAVKVLDCNGSGSNSAVIAGMQWAMQHASQNDPRRAVANMSLGGGYSQASNQAAAAIVRAGIFLAVAAGNDNRDARSFSPASEPTVCTAAASHVRDGKASFSNWGQLVDVYAPGQDIISARPGGGSRSLSGTSMASPHVCGLGAYLIGLGRGSGGGLCDTIKRMALPVISNPGSGTTNRLINNGVSQ.

The first 19 residues, 1 to 19 (MVFLGKILPLALAALSVNG), serve as a signal peptide directing secretion. The propeptide occupies 20-117 (AEILSAPGAE…IERDQIMKAS (98 aa)). The 81-residue stretch at 35-115 (YIVVMKEGTS…AYIERDQIMK (81 aa)) folds into the Inhibitor I9 domain. Positions 127 to 398 (SWGLARVSSR…NRLINNGVSQ (272 aa)) constitute a Peptidase S8 domain. Active-site charge relay system residues include aspartate 159 and histidine 190. N-linked (GlcNAc...) asparagine glycans are attached at residues asparagine 220 and asparagine 250. Catalysis depends on serine 344, which acts as the Charge relay system.

The protein belongs to the peptidase S8 family.

It localises to the secreted. Secreted subtilisin-like serine protease with keratinolytic activity that contributes to pathogenicity. The chain is Subtilisin-like protease CPC735_050320 from Coccidioides posadasii (strain C735) (Valley fever fungus).